We begin with the raw amino-acid sequence, 67 residues long: Sec-independent protein translocase protein TatA (67 aa).

Residues 1 to 21 (MMPGPFELIVILVIVLLLFGG) form a helical membrane-spanning segment.

Belongs to the TatA/E family. The Tat system comprises two distinct complexes: a TatABC complex, containing multiple copies of TatA, TatB and TatC subunits, and a separate TatA complex, containing only TatA subunits. Substrates initially bind to the TatABC complex, which probably triggers association of the separate TatA complex to form the active translocon.

It localises to the cell inner membrane. In terms of biological role, part of the twin-arginine translocation (Tat) system that transports large folded proteins containing a characteristic twin-arginine motif in their signal peptide across membranes. TatA could form the protein-conducting channel of the Tat system. This is Sec-independent protein translocase protein TatA from Ruthia magnifica subsp. Calyptogena magnifica.